The following is a 487-amino-acid chain: Spermatogenesis-associated protein 6 (487 aa).

An N-terminal signal peptide occupies residues 1–17 (MPKVKALQCALALEIRS). A disordered region spans residues 170 to 221 (APVEKPHSRLQNRTSRSQKKKSKSPERNKYCINAKNYEQPTTSKSHSPSPYT). N181 carries N-linked (GlcNAc...) asparagine glycosylation. Positions 205–219 (NYEQPTTSKSHSPSP) are enriched in polar residues. S216 and S218 each carry phosphoserine. K247 participates in a covalent cross-link: Glycyl lysine isopeptide (Lys-Gly) (interchain with G-Cter in SUMO2). Phosphoserine occurs at positions 264, 273, 324, 342, 345, 353, 423, 464, and 486.

It belongs to the SPATA6 family. Interacts with MYL6.

The protein resides in the secreted. It localises to the cell projection. It is found in the cilium. The protein localises to the flagellum. Its function is as follows. Required for formation of the sperm connecting piece during spermiogenesis. Sperm connecting piece is essential for linking the developing flagellum to the head during late spermiogenesis. May be involved in myosin-based microfilament transport through interaction with myosin subunits. This Bos taurus (Bovine) protein is Spermatogenesis-associated protein 6 (SPATA6).